The primary structure comprises 325 residues: Coiled-coil domain-containing protein 130 homolog (325 aa).

Residues leucine 156 to glutamate 262 are a coiled coil.

Belongs to the CWC16 family.

This Dictyostelium discoideum (Social amoeba) protein is Coiled-coil domain-containing protein 130 homolog.